The sequence spans 325 residues: Coiled-coil domain-containing protein 130 homolog (325 aa).

A coiled-coil region spans residues 156–262 (LKLENKKLDI…KLKRELIKNE (107 aa)).

It belongs to the CWC16 family.

In Dictyostelium discoideum (Social amoeba), this protein is Coiled-coil domain-containing protein 130 homolog.